The chain runs to 465 residues: Protein hedgehog (465 aa).

The N-palmitoyl cysteine moiety is linked to residue Cys79. 7 residues coordinate Ca(2+): Glu143, Glu144, Asp149, Thr179, Glu180, Asp183, and Asp185. The Cholesterol glycine ester moiety is linked to residue Gly251.

It belongs to the hedgehog family. In terms of assembly, interacts with shf. The C-terminal part of the hedgehog protein precursor displays an autoproteolysis activity that results in the cleavage of the full-length protein into two parts (N-product and C-product). In addition, the C-terminal part displays a cholesterol transferase activity that results by the covalent attachment of a cholesterol moiety to the C-terminal of the newly generated N-product. The N-product is the active species in both local and long-range signaling, whereas the C-product has no signaling activity. Post-translationally, cholesterylation is required for N-product targeting to lipid rafts and multimerization. In terms of processing, N-palmitoylation by Rasp of the hedgehog N-product, within the secretory pathway, is required for the embryonic and larval patterning activities of the hedgehog signal.

The protein resides in the nucleus. It is found in the cytoplasm. The protein localises to the cell membrane. The catalysed reaction is glycyl-L-cysteinyl-[protein] + cholesterol + H(+) = [protein]-C-terminal glycyl cholesterol ester + N-terminal L-cysteinyl-[protein]. Functionally, the C-terminal part of the hedgehog protein precursor displays an autoproteolysis activity that results in the cleavage of the full-length protein into two parts (N-product and C-product). In addition, the C-terminal part displays a cholesterol transferase activity that results by the covalent attachment of a cholesterol moiety to the C-terminal of the newly generated N-product. Once cleaved, the C-product has no signaling activity and diffuses from the cell. The dually lipidated hedgehog protein N-product is a morphogen which is essential for a variety of patterning events during development. Establishes the anterior-posterior axis of the embryonic segments and patterns the larval imaginal disks. Binds to the patched (ptc) receptor, which functions in association with smoothened (smo), to activate the transcription of target genes wingless (wg), decapentaplegic (dpp) and ptc. In the absence of hh, ptc represses the constitutive signaling activity of smo through fused (fu). Essential component of a signaling pathway which regulates the Duox-dependent gut immune response to bacterial uracil; required to activate Cad99C-dependent endosome formation, norpA-dependent Ca2+ mobilization and p38 MAPK, which are essential steps in the Duox-dependent production of reactive oxygen species (ROS) in response to intestinal bacterial infection. During photoreceptor differentiation, it up-regulates transcription of Ubr3, which in turn promotes the hh-signaling pathway by mediating the ubiquitination and degradation of cos. This Drosophila yakuba (Fruit fly) protein is Protein hedgehog.